Reading from the N-terminus, the 478-residue chain is Phosphoglycerate kinase 2, chloroplastic (478 aa).

A chloroplast-targeting transit peptide spans 1–74 (MASTAATAAL…GKGARGVITM (74 aa)). The residue at position 78 (Ser78) is a Phosphoserine. (2R)-3-phosphoglycerate-binding residues include Ala96, Asp97, Asn99, Arg113, Thr135, His136, Gly138, Arg139, Arg194, His226, and Arg227. Gly272 contributes to the ADP binding site. Residue Gly272 coordinates CDP. Lys274 and Lys278 together coordinate AMP. Lys278 serves as a coordination point for ATP. Gly296 provides a ligand contact to ADP. A CDP-binding site is contributed by Gly296. AMP contacts are provided by Gly297 and Gly369. Gly297 and Gly369 together coordinate ATP. CDP is bound by residues Gly394 and Phe399. Phe399 is an ADP binding site. Glu400 contributes to the AMP binding site. 3 residues coordinate ATP: Glu400, Asp431, and Ser432. Asp431 serves as a coordination point for Mg(2+).

It belongs to the phosphoglycerate kinase family. In terms of assembly, monomer. Requires Mg(2+) as cofactor.

It localises to the plastid. It is found in the chloroplast. It catalyses the reaction (2R)-3-phosphoglycerate + ATP = (2R)-3-phospho-glyceroyl phosphate + ADP. Its pathway is carbohydrate biosynthesis; Calvin cycle. The chain is Phosphoglycerate kinase 2, chloroplastic from Arabidopsis thaliana (Mouse-ear cress).